The primary structure comprises 829 residues: Probable beta-glucosidase H (829 aa).

Asn-13 carries an N-linked (GlcNAc...) asparagine glycan. Asp-225 is an active-site residue. Residues Asn-304, Asn-473, Asn-602, Asn-627, and Asn-664 are each glycosylated (N-linked (GlcNAc...) asparagine). The PA14 domain maps to 389 to 548 (RMLSNAVIHF…DPEQMVANAV (160 aa)).

It belongs to the glycosyl hydrolase 3 family.

Its subcellular location is the secreted. The enzyme catalyses Hydrolysis of terminal, non-reducing beta-D-glucosyl residues with release of beta-D-glucose.. It functions in the pathway glycan metabolism; cellulose degradation. Beta-glucosidases are one of a number of cellulolytic enzymes involved in the degradation of cellulosic biomass. Catalyzes the last step releasing glucose from the inhibitory cellobiose. The protein is Probable beta-glucosidase H (bglH) of Aspergillus fumigatus (strain ATCC MYA-4609 / CBS 101355 / FGSC A1100 / Af293) (Neosartorya fumigata).